The chain runs to 191 residues: MPSAPRKQSKTYKVPRRPFESARLDAELKLAGEYGLRNKHEIWRVALTLSKIRRAARELLTLDEKDPKRLFEGNAIIRRLVRLGILDETRMKLDYVLALRIEDFLERRLQTQVFKLGLAKSIHHARVLIFQRHIRVGKQIVNVPSFVVRLDTQKHIDFALSSPYGGGRPGRCKRKRLRSQEGGEGEEAEEE.

Residues serine 50 and serine 161 each carry the phosphoserine modification. Positions 107–181 (RRLQTQVFKL…CKRKRLRSQE (75 aa)) constitute an S4 RNA-binding domain. Tyrosine 164 bears the Phosphotyrosine mark. Residues 166–191 (GGRPGRCKRKRLRSQEGGEGEEAEEE) form a disordered region. A Phosphoserine modification is found at serine 179.

This sequence belongs to the universal ribosomal protein uS4 family. Component of the small ribosomal subunit (SSU). Mature yeast ribosomes consist of a small (40S) and a large (60S) subunit. The 40S small subunit contains 1 molecule of ribosomal RNA (18S rRNA) and at least 33 different proteins. The large 60S subunit contains 3 rRNA molecules (25S, 5.8S and 5S rRNA) and at least 46 different proteins. Interacts with snoRNA U3. uS11 interacts with MPP10. Component of the ribosomal small subunit (SSU) processome composed of at least 40 protein subunits and snoRNA U3.

It localises to the cytoplasm. Its function is as follows. Component of the ribosome, a large ribonucleoprotein complex responsible for the synthesis of proteins in the cell. The small ribosomal subunit (SSU) binds messenger RNAs (mRNAs) and translates the encoded message by selecting cognate aminoacyl-transfer RNA (tRNA) molecules. The large subunit (LSU) contains the ribosomal catalytic site termed the peptidyl transferase center (PTC), which catalyzes the formation of peptide bonds, thereby polymerizing the amino acids delivered by tRNAs into a polypeptide chain. The nascent polypeptides leave the ribosome through a tunnel in the LSU and interact with protein factors that function in enzymatic processing, targeting, and the membrane insertion of nascent chains at the exit of the ribosomal tunnel. uS4 is involved in nucleolar processing of pre-18S ribosomal RNA and ribosome assembly. This chain is Small ribosomal subunit protein uS4A (rps901), found in Schizosaccharomyces pombe (strain 972 / ATCC 24843) (Fission yeast).